Here is a 276-residue protein sequence, read N- to C-terminus: Diaminopimelate epimerase (276 aa).

Substrate contacts are provided by Asn13, Gln46, and Asn66. Cys75 acts as the Proton donor in catalysis. Substrate is bound by residues 76–77 (GN), Asn159, Asn192, and 210–211 (ER). The active-site Proton acceptor is the Cys219. Residue 220–221 (GT) coordinates substrate.

Belongs to the diaminopimelate epimerase family. In terms of assembly, homodimer.

Its subcellular location is the cytoplasm. The catalysed reaction is (2S,6S)-2,6-diaminopimelate = meso-2,6-diaminopimelate. The protein operates within amino-acid biosynthesis; L-lysine biosynthesis via DAP pathway; DL-2,6-diaminopimelate from LL-2,6-diaminopimelate: step 1/1. Its function is as follows. Catalyzes the stereoinversion of LL-2,6-diaminopimelate (L,L-DAP) to meso-diaminopimelate (meso-DAP), a precursor of L-lysine and an essential component of the bacterial peptidoglycan. This Stutzerimonas stutzeri (strain A1501) (Pseudomonas stutzeri) protein is Diaminopimelate epimerase.